The primary structure comprises 193 residues: Probable GTP-binding protein EngB (193 aa).

In terms of domain architecture, EngB-type G spans 22–193 (GLPEFAFAGR…LIAVLESYLA (172 aa)). GTP is bound by residues 30 to 37 (GRSNVGKS), 57 to 61 (GKTQG), 75 to 78 (DLPG), 142 to 145 (TKID), and 173 to 175 (FSS). Mg(2+)-binding residues include Ser-37 and Thr-59.

Belongs to the TRAFAC class TrmE-Era-EngA-EngB-Septin-like GTPase superfamily. EngB GTPase family. Mg(2+) serves as cofactor.

In terms of biological role, necessary for normal cell division and for the maintenance of normal septation. This is Probable GTP-binding protein EngB from Desulfotalea psychrophila (strain LSv54 / DSM 12343).